The primary structure comprises 343 residues: Holliday junction branch migration complex subunit RuvB (343 aa).

The large ATPase domain (RuvB-L) stretch occupies residues 1-181 (MDRIIDTAAT…FGIVQRLEFY (181 aa)). ATP-binding positions include isoleucine 20, arginine 21, glycine 62, lysine 65, threonine 66, threonine 67, 128–130 (EDF), arginine 171, tyrosine 181, and arginine 218. Threonine 66 is a binding site for Mg(2+). Residues 182–252 (SPEDLARIVR…VAQAAMQMLK (71 aa)) form a small ATPAse domain (RuvB-S) region. Positions 255-343 (QGGFDELDRR…SAFTDPEDLF (89 aa)) are head domain (RuvB-H). Residues arginine 291, arginine 310, and arginine 315 each contribute to the DNA site.

Belongs to the RuvB family. As to quaternary structure, homohexamer. Forms an RuvA(8)-RuvB(12)-Holliday junction (HJ) complex. HJ DNA is sandwiched between 2 RuvA tetramers; dsDNA enters through RuvA and exits via RuvB. An RuvB hexamer assembles on each DNA strand where it exits the tetramer. Each RuvB hexamer is contacted by two RuvA subunits (via domain III) on 2 adjacent RuvB subunits; this complex drives branch migration. In the full resolvosome a probable DNA-RuvA(4)-RuvB(12)-RuvC(2) complex forms which resolves the HJ.

Its subcellular location is the cytoplasm. The catalysed reaction is ATP + H2O = ADP + phosphate + H(+). In terms of biological role, the RuvA-RuvB-RuvC complex processes Holliday junction (HJ) DNA during genetic recombination and DNA repair, while the RuvA-RuvB complex plays an important role in the rescue of blocked DNA replication forks via replication fork reversal (RFR). RuvA specifically binds to HJ cruciform DNA, conferring on it an open structure. The RuvB hexamer acts as an ATP-dependent pump, pulling dsDNA into and through the RuvAB complex. RuvB forms 2 homohexamers on either side of HJ DNA bound by 1 or 2 RuvA tetramers; 4 subunits per hexamer contact DNA at a time. Coordinated motions by a converter formed by DNA-disengaged RuvB subunits stimulates ATP hydrolysis and nucleotide exchange. Immobilization of the converter enables RuvB to convert the ATP-contained energy into a lever motion, pulling 2 nucleotides of DNA out of the RuvA tetramer per ATP hydrolyzed, thus driving DNA branch migration. The RuvB motors rotate together with the DNA substrate, which together with the progressing nucleotide cycle form the mechanistic basis for DNA recombination by continuous HJ branch migration. Branch migration allows RuvC to scan DNA until it finds its consensus sequence, where it cleaves and resolves cruciform DNA. This Xylella fastidiosa (strain 9a5c) protein is Holliday junction branch migration complex subunit RuvB.